The chain runs to 754 residues: Glutathione biosynthesis bifunctional protein GshAB (754 aa).

Positions 1-332 (MTLNQLLQKL…QGHALNEKIA (332 aa)) are glutamate--cysteine ligase. The ATP-grasp domain occupies 488–746 (KKILADASFP…ITTKILDKLF (259 aa)). 515–573 (PLIKDKQIVVKPKSTNFGLGISIFQEPASLDNYQKALEIAFAEDTSVLVEEFIPGTEYR) provides a ligand contact to ATP. The Mg(2+) site is built by Asp-695, Glu-716, and Asn-718. Residues Asp-695, Glu-716, and Asn-718 each contribute to the Mn(2+) site.

It in the N-terminal section; belongs to the glutamate--cysteine ligase type 1 family. Type 2 subfamily. In terms of assembly, monomer. Requires Mg(2+) as cofactor. Mn(2+) serves as cofactor.

The catalysed reaction is L-cysteine + L-glutamate + ATP = gamma-L-glutamyl-L-cysteine + ADP + phosphate + H(+). The enzyme catalyses gamma-L-glutamyl-L-cysteine + glycine + ATP = glutathione + ADP + phosphate + H(+). Its pathway is sulfur metabolism; glutathione biosynthesis; glutathione from L-cysteine and L-glutamate: step 1/2. The protein operates within sulfur metabolism; glutathione biosynthesis; glutathione from L-cysteine and L-glutamate: step 2/2. Functionally, synthesizes glutathione from L-glutamate and L-cysteine via gamma-L-glutamyl-L-cysteine. This is Glutathione biosynthesis bifunctional protein GshAB from Streptococcus thermophilus (strain ATCC BAA-250 / LMG 18311).